Consider the following 119-residue polypeptide: Ribonuclease P protein component (119 aa).

It belongs to the RnpA family. As to quaternary structure, consists of a catalytic RNA component (M1 or rnpB) and a protein subunit.

It catalyses the reaction Endonucleolytic cleavage of RNA, removing 5'-extranucleotides from tRNA precursor.. Its function is as follows. RNaseP catalyzes the removal of the 5'-leader sequence from pre-tRNA to produce the mature 5'-terminus. It can also cleave other RNA substrates such as 4.5S RNA. The protein component plays an auxiliary but essential role in vivo by binding to the 5'-leader sequence and broadening the substrate specificity of the ribozyme. This is Ribonuclease P protein component from Shewanella woodyi (strain ATCC 51908 / MS32).